The chain runs to 1342 residues: Subtilisin-like protease 2 (1342 aa).

Residues 1–18 (MLNIIYVVSLILIKFIFY) form the signal peptide. A propeptide spans 19–687 (KECNNNNNYY…KLYNNKYSFL (669 aa)) (inhibition peptide). Disordered stretches follow at residues 85 to 111 (EKKT…ENEI) and 143 to 171 (ADVS…NYKN). N-linked (GlcNAc...) asparagine glycans are attached at residues N165, N343, N451, N455, and N493. Residues 415–474 (KKSKKEKENTQQKGGNNPNVDINILNNNNNNNNNNNNNSNNNSNSMNDEEINYNNNNNKE) form a disordered region. Residues 430–474 (NNPNVDINILNNNNNNNNNNNNNSNNNSNSMNDEEINYNNNNNKE) are compositionally biased toward low complexity. The interval 500–531 (IYHNKNDNSYKNKKEGTGKNNDNNDPNNNNNK) is disordered. Residues 503-516 (NKNDNSYKNKKEGT) show a composition bias toward basic and acidic residues. The span at 518–531 (KNNDNNDPNNNNNK) shows a compositional bias: low complexity. 3 N-linked (GlcNAc...) asparagine glycosylation sites follow: N551, N642, and N729. At 688–1137 (NKFLNIEPLI…LYNLYEYDSH (450 aa)) the chain is on the extracellular side. Residues 727-1020 (TWNLSIIRVF…DSLVNAEGAV (294 aa)) form the Peptidase S8 domain. Catalysis depends on charge relay system residues D755 and H798. N821, N857, N893, and N951 each carry an N-linked (GlcNAc...) asparagine glycan. The active-site Charge relay system is S961. N-linked (GlcNAc...) asparagine glycans are attached at residues N1010 and N1106. A helical transmembrane segment spans residues 1138 to 1158 (YLLASVILFFLALLSIFVGMI). Residues 1159–1342 (YMKSRKHSDK…MNQLDDMFMK (184 aa)) are Cytoplasmic-facing.

This sequence belongs to the peptidase S8 family. Post-translationally, proteolytically cleaved at the N-terminus to generate a 74kDa intermediate which is further processed into a 72kDa form. The first maturation cleavage is autocatalytic, occurs in the ER and is necessary for the subsequent SUB2 trafficking to the microneme. The second cleavage may be mediated by PMX/plasmepsin X.

It localises to the cell membrane. It is found in the cytoplasmic vesicle. Its subcellular location is the secretory vesicle. The protein localises to the microneme membrane. The catalysed reaction is Hydrolysis of proteins with broad specificity for peptide bonds, and a preference for a large uncharged residue in P1. Hydrolyzes peptide amides.. Its activity is regulated as follows. Activation may be calcium-dependent. Inhibited by the non-covalent interaction with the cleaved propeptide. Serine protease which plays an essential role in the shedding of AMA1, MSP1 and MSP7 from the surface of the invading merozoite; this step is essential for productive invasion and the release of the adhesion between the erythrocyte and the merozoite. May cleave TRAMP/PTTRAMP, thereby shedding TRAMP from the merozoite surface during erythrocyte invasion. The polypeptide is Subtilisin-like protease 2 (Plasmodium falciparum).